Here is a 248-residue protein sequence, read N- to C-terminus: 2,3-dihydro-2,3-dihydroxybenzoate dehydrogenase (248 aa).

NAD(+) is bound at residue 9 to 33 (WVTGAGKGIGYATALAFVEAGAKVT). Position 131 (Ser-131) interacts with substrate. The Proton acceptor role is filled by Tyr-144.

Belongs to the short-chain dehydrogenases/reductases (SDR) family. As to quaternary structure, homotetramer; dimer of dimers. EntA and EntE interact together.

The catalysed reaction is (2S,3S)-2,3-dihydroxy-2,3-dihydrobenzoate + NAD(+) = 2,3-dihydroxybenzoate + NADH + H(+). Its pathway is siderophore biosynthesis; enterobactin biosynthesis. With respect to regulation, inhibited by cis-2-hydroxy-3-cyclohexen-1-carboxylate, cis-2-hydroxycyclohexane-1-carboxylate and trans-2-hydroxycyclohexane-1-carboxylate. Its function is as follows. Involved in the biosynthesis of the siderophore enterobactin (enterochelin), which is a macrocyclic trimeric lactone of N-(2,3-dihydroxybenzoyl)-serine. Catalyzes the reversible NAD-dependent oxidation of the C3-hydroxyl group of 2,3-dihydro-2,3-dihydroxybenzoate (2,3-diDHB), producing the transient intermediate 2-hydroxy-3-oxo-4,6-cyclohexadiene-1-carboxylate, which undergoes rapid aromatization to the final product, 2,3-dihydroxybenzoate (2,3-DHB). Only the compounds with a C3-hydroxyl group such as methyl 2,3-dihydro-2,3-dihydroxybenzoate, methyl-3-hydroxy-1,4-cyclohexadiene-1-carboxylate, trans-3-hydroxy-2-cyclohexene-1-carboxylate, cis-3-hydroxy-4-cyclohexene-1-carboxylate, cis-3-hydroxycyclohexane-1-carboxylic acid are oxidized to the corresponding ketone products. The stereospecificity of the C3 allylic alcohol group oxidation is 3R in a 1R,3R dihydro substrate. It can also increase the DHB-AMP ligase activity of EntE by interaction EntE. The polypeptide is 2,3-dihydro-2,3-dihydroxybenzoate dehydrogenase (Escherichia coli (strain K12)).